The following is a 399-amino-acid chain: F-box protein At1g10110 (399 aa).

The F-box domain maps to 9 to 56 (PNWSELVTDILSLVFKHLSFTDFARAKTVCSSWYFASKSSSPRKNHTP).

The sequence is that of F-box protein At1g10110 from Arabidopsis thaliana (Mouse-ear cress).